The primary structure comprises 126 residues: Small ribosomal subunit protein bS6 (126 aa).

This sequence belongs to the bacterial ribosomal protein bS6 family.

In terms of biological role, binds together with bS18 to 16S ribosomal RNA. The sequence is that of Small ribosomal subunit protein bS6 from Bordetella bronchiseptica (strain ATCC BAA-588 / NCTC 13252 / RB50) (Alcaligenes bronchisepticus).